Consider the following 147-residue polypeptide: Cytochrome c-type biogenesis protein CcmE (147 aa).

Residues 1 to 7 (MTRKQKR) are Cytoplasmic-facing. The helical; Signal-anchor for type II membrane protein transmembrane segment at 8–28 (LSVIVGGLAFLGAATGLTFYA) threads the bilayer. Topologically, residues 29-147 (LGQKASYFYM…KGVWQESKSE (119 aa)) are periplasmic. Heme is bound by residues His122 and Tyr126.

The protein belongs to the CcmE/CycJ family.

It is found in the cell inner membrane. In terms of biological role, heme chaperone required for the biogenesis of c-type cytochromes. Transiently binds heme delivered by CcmC and transfers the heme to apo-cytochromes in a process facilitated by CcmF and CcmH. This chain is Cytochrome c-type biogenesis protein CcmE, found in Mesorhizobium japonicum (strain LMG 29417 / CECT 9101 / MAFF 303099) (Mesorhizobium loti (strain MAFF 303099)).